The primary structure comprises 238 residues: tRNA (guanine-N(7)-)-methyltransferase (238 aa).

S-adenosyl-L-methionine contacts are provided by Glu68, Glu93, Asp120, and Asp143. Asp143 is an active-site residue. Substrate contacts are provided by residues Lys147, Asp179, and 216 to 219; that span reads TKFE.

This sequence belongs to the class I-like SAM-binding methyltransferase superfamily. TrmB family.

The catalysed reaction is guanosine(46) in tRNA + S-adenosyl-L-methionine = N(7)-methylguanosine(46) in tRNA + S-adenosyl-L-homocysteine. It functions in the pathway tRNA modification; N(7)-methylguanine-tRNA biosynthesis. Catalyzes the formation of N(7)-methylguanine at position 46 (m7G46) in tRNA. This Shewanella baltica (strain OS155 / ATCC BAA-1091) protein is tRNA (guanine-N(7)-)-methyltransferase.